The following is a 294-amino-acid chain: uncharacterized protein (294 aa).

The segment at 1–32 is disordered; that stretch reads MSHLKDPTTQYYTGEYPKQKQPTPGIQAKMTP. An N6-acetyllysine modification is found at lysine 39. 53 to 77 provides a ligand contact to NADP(+); sequence LVTGGDSGIGRAAAIAYAREGADVA. Serine 186 is a substrate binding site. The Proton acceptor role is filled by tyrosine 199.

This sequence belongs to the short-chain dehydrogenases/reductases (SDR) family.

This is an uncharacterized protein from Escherichia coli (strain K12).